The chain runs to 310 residues: Signal peptidase I (310 aa).

Residues Leu5–Ile25 traverse the membrane as a helical segment. At Leu26 to Ser57 the chain is on the cytoplasmic side. Residues Phe58–Ile78 form a helical membrane-spanning segment. Topologically, residues Pro79 to Tyr310 are extracellular. Catalysis depends on residues Ser82 and Lys137.

Belongs to the peptidase S26 family.

It is found in the cell membrane. The catalysed reaction is Cleavage of hydrophobic, N-terminal signal or leader sequences from secreted and periplasmic proteins.. This chain is Signal peptidase I (lepB), found in Buchnera aphidicola subsp. Baizongia pistaciae (strain Bp).